A 1620-amino-acid polypeptide reads, in one-letter code: Putative zinc carboxypeptidase (1620 aa).

The Extracellular portion of the chain corresponds to 1 to 1367 (MLFKNEDSGN…SYDFLYFDEN (1367 aa)). N-linked (GlcNAc...) asparagine glycosylation occurs at asparagine 19. The disordered stretch occupies residues 32-74 (RNDNKNNDNEDNKQDDEEKNDEDDNKSNLLLEENEENKRQGDK). Positions 33-43 (NDNKNNDNEDN) are enriched in basic and acidic residues. Residues 44–55 (KQDDEEKNDEDD) are compositionally biased toward acidic residues. N-linked (GlcNAc...) asparagine glycans are attached at residues asparagine 56 and asparagine 102. A disordered region spans residues 309-328 (GNHYDAHESTNTYDEEKTRE). Asparagine 354, asparagine 487, asparagine 508, asparagine 529, asparagine 550, asparagine 571, asparagine 589, asparagine 687, asparagine 802, and asparagine 1010 each carry an N-linked (GlcNAc...) asparagine glycan. Residues 497–559 (VNNLDSTVNY…NSTGNNINNI (63 aa)) are possible malaria epitope. Residues 1004 to 1261 (GENKKNNGTK…FYVQNYFEGY (258 aa)) form the Peptidase M14 domain. The Zn(2+) site is built by histidine 1059 and glutamate 1062. N-linked (GlcNAc...) asparagine glycans are attached at residues asparagine 1064 and asparagine 1141. Position 1155 (histidine 1155) interacts with Zn(2+). Glutamate 1229 functions as the Proton donor/acceptor in the catalytic mechanism. The interval 1279–1329 (NIKGDDNINGDDNIKGGDNIKGDDNIKRDDNFQRDDNFQRDDNFQRGDNFH) is disordered. A helical transmembrane segment spans residues 1368 to 1388 (LLFMTGVSFGICLFKFINFLS). Residues 1389 to 1620 (YHKSSICRRT…SKRKKVIVIL (232 aa)) lie on the Cytoplasmic side of the membrane. The segment at 1560-1620 (PNGKYKGPGF…SKRKKVIVIL (61 aa)) is disordered. The span at 1581-1597 (NKNESKTEKKSKTENKS) shows a compositional bias: basic and acidic residues. The segment covering 1598-1620 (KSKSKNKSKSKNKSKRKKVIVIL) has biased composition (basic residues).

Belongs to the peptidase M14 family. Zn(2+) serves as cofactor.

The protein localises to the membrane. The protein is Putative zinc carboxypeptidase of Plasmodium falciparum (isolate 3D7).